The primary structure comprises 99 residues: Putative pterin-4-alpha-carbinolamine dehydratase (99 aa).

This sequence belongs to the pterin-4-alpha-carbinolamine dehydratase family.

The enzyme catalyses (4aS,6R)-4a-hydroxy-L-erythro-5,6,7,8-tetrahydrobiopterin = (6R)-L-erythro-6,7-dihydrobiopterin + H2O. This is Putative pterin-4-alpha-carbinolamine dehydratase from Synechococcus sp. (strain CC9311).